A 37-amino-acid polypeptide reads, in one-letter code: Turripeptide Lol6.2 (37 aa).

3 disulfide bridges follow: cysteine 4–cysteine 16, cysteine 8–cysteine 21, and cysteine 15–cysteine 29.

As to expression, expressed by the venom duct.

It is found in the secreted. Functionally, acts as a neurotoxin by inhibiting an ion channel. The sequence is that of Turripeptide Lol6.2 from Iotyrris olangoensis (Sea snail).